A 348-amino-acid chain; its full sequence is NADH-ubiquinone oxidoreductase chain 2 (348 aa).

10 helical membrane-spanning segments follow: residues 2–22 (SPYV…LTLF), 26–46 (WLMA…MMTY), 55–75 (AAIK…FAII), 96–116 (VLMT…FWVP), 149–169 (LNMK…GWGG), 178–198 (ILAY…MINP), 199–219 (SLAL…FLML), 242–262 (TAIL…GFMP), 276–296 (IIMA…YMRI), and 323–343 (INII…TPLL).

The protein belongs to the complex I subunit 2 family. As to quaternary structure, core subunit of respiratory chain NADH dehydrogenase (Complex I) which is composed of 45 different subunits. Interacts with TMEM242.

The protein localises to the mitochondrion inner membrane. It carries out the reaction a ubiquinone + NADH + 5 H(+)(in) = a ubiquinol + NAD(+) + 4 H(+)(out). Functionally, core subunit of the mitochondrial membrane respiratory chain NADH dehydrogenase (Complex I) that is believed to belong to the minimal assembly required for catalysis. Complex I functions in the transfer of electrons from NADH to the respiratory chain. The immediate electron acceptor for the enzyme is believed to be ubiquinone. The protein is NADH-ubiquinone oxidoreductase chain 2 of Osphranter robustus (Wallaroo).